A 183-amino-acid polypeptide reads, in one-letter code: UPF0316 protein BcerKBAB4_3093 (183 aa).

A run of 3 helical transmembrane segments spans residues 6 to 26, 32 to 52, and 58 to 78; these read LIFV…ILLV, SAAG…GIVF, and WMNI…GGYI.

The protein belongs to the UPF0316 family.

It localises to the cell membrane. The sequence is that of UPF0316 protein BcerKBAB4_3093 from Bacillus mycoides (strain KBAB4) (Bacillus weihenstephanensis).